Reading from the N-terminus, the 337-residue chain is ERI1 exoribonuclease 3 (337 aa).

An Exonuclease domain is found at 146–320; that stretch reads FLVLDFEATC…DDCKNIANIM (175 aa). Mg(2+) is bound by residues D150, E152, and D249. The Proton acceptor role is filled by E152. E152 is a binding site for AMP. Residue H307 is the Proton acceptor of the active site. Residue H307 coordinates AMP. Position 312 (D312) interacts with Mg(2+).

As to quaternary structure, interacts with PRNP. Requires Mg(2+) as cofactor. In terms of tissue distribution, highly expressed in the brain, heart, thyroid and testis. Expressed at low levels in the muscle cells, liver, pancreas and kidney.

In Mus musculus (Mouse), this protein is ERI1 exoribonuclease 3 (Eri3).